A 348-amino-acid polypeptide reads, in one-letter code: Tripartite motif-containing protein 16-like protein (348 aa).

The B30.2/SPRY domain maps to 139–337 (YWTSKPEPST…RIVDLGEEPE (199 aa)).

The protein belongs to the TRIM/RBCC family.

It is found in the cytoplasm. The chain is Tripartite motif-containing protein 16-like protein (TRIM16L) from Homo sapiens (Human).